Consider the following 232-residue polypeptide: Putative N-acetylmannosamine-6-phosphate 2-epimerase (232 aa).

The protein belongs to the NanE family.

The enzyme catalyses an N-acyl-D-glucosamine 6-phosphate = an N-acyl-D-mannosamine 6-phosphate. The protein operates within amino-sugar metabolism; N-acetylneuraminate degradation; D-fructose 6-phosphate from N-acetylneuraminate: step 3/5. Converts N-acetylmannosamine-6-phosphate (ManNAc-6-P) to N-acetylglucosamine-6-phosphate (GlcNAc-6-P). The protein is Putative N-acetylmannosamine-6-phosphate 2-epimerase of Synechococcus elongatus (strain ATCC 33912 / PCC 7942 / FACHB-805) (Anacystis nidulans R2).